Consider the following 655-residue polypeptide: Peroxidase skpo-1 (655 aa).

A signal peptide spans 1 to 19 (MKSLLFSILLIYLIQLVRS). The 35-residue stretch at 22-56 (CTDKHIHCFFWSQEGECEVNPRWMKKHCQKACGTC) folds into the ShKT domain. 4 disulfides stabilise this stretch: Cys-22–Cys-56, Cys-29–Cys-49, Cys-38–Cys-53, and Cys-133–Cys-150. The active-site Proton acceptor is the His-222. His-428 contacts heme b. 2 disulfide bridges follow: Cys-520–Cys-576 and Cys-617–Cys-642.

Belongs to the peroxidase family. XPO subfamily. Heme b is required as a cofactor. As to expression, exclusively expressed in hypodermis.

It carries out the reaction 2 a phenolic donor + H2O2 = 2 a phenolic radical donor + 2 H2O. Functionally, involved in hypodermal immune response against some types of bacterial infection. Probably utilizes H(2)O(2) produced by the NADPH oxidase bli-3. May play a role in cuticule biosynthesis. The sequence is that of Peroxidase skpo-1 from Caenorhabditis elegans.